The following is a 505-amino-acid chain: Deoxyguanosinetriphosphate triphosphohydrolase (505 aa).

The HD domain occupies 66 to 273 (RLTHSLEVQQ…MEAADDISYC (208 aa)).

The protein belongs to the dGTPase family. Type 1 subfamily. In terms of assembly, homotetramer. Requires Mg(2+) as cofactor.

It carries out the reaction dGTP + H2O = 2'-deoxyguanosine + triphosphate + H(+). In terms of biological role, dGTPase preferentially hydrolyzes dGTP over the other canonical NTPs. The polypeptide is Deoxyguanosinetriphosphate triphosphohydrolase (Yersinia enterocolitica serotype O:8 / biotype 1B (strain NCTC 13174 / 8081)).